The primary structure comprises 194 residues: DPY30 domain-containing protein 2 (194 aa).

The disordered stretch occupies residues 126–172; sequence EAFEKEPLKQESLPGTSDMIPGMPQQSPSSEPSVSSQVDLNTGTPQE. Over residues 149–163 the composition is skewed to low complexity; sequence PQQSPSSEPSVSSQV.

Belongs to the dpy-30 family.

The protein is DPY30 domain-containing protein 2 (DYDC2) of Bos taurus (Bovine).